The chain runs to 415 residues: Hepatocyte nuclear factor 3-beta (415 aa).

The segment at residues 150 to 244 (KPPYSYISLI…ENGCYLRRQK (95 aa)) is a DNA-binding region (fork-head). The segment covering 251–262 (KMSMKEPGRKGG) has biased composition (basic and acidic residues). A disordered region spans residues 251–324 (KMSMKEPGRK…GQHLMSQHHS (74 aa)). Over residues 266 to 277 (SANSSSDSCNGN) the composition is skewed to low complexity. Residues 310-323 (SPVSQGQHLMSQHH) are compositionally biased toward polar residues.

It is found in the nucleus. Its function is as follows. Transcription activator for a number of liver genes. Interacts with the cis-acting regulatory regions of these genes. The polypeptide is Hepatocyte nuclear factor 3-beta (foxa2) (Oryzias latipes (Japanese rice fish)).